The sequence spans 395 residues: MPLRSTFTRFFAMEAASGLLLIAAAILALIINNSPLSWLYNGLLETPVVAQVGALKIAKPLLLWINDGLMALFFLLIGLEVKREVLEGQLAKPSQIVLPGAAAIGGMLVPALIYWFLNRDNPPALNGWAIPTATDIAFALGVLALLGKRVPTSLKLFLMTLAIIDDLGAIVIIAIFYSGTLSTLSLMLAGACIAALVAMNRMGVVKLGPYMIIGLILWVCVLKSGVHATLAGVTLAFCIPLRTRNAEPSPLKALEHALHPWVSFGILPLFAFANAGLSLSGVTLESFTHHVPMGIAVGLLLGKTIGVFGLTWMAVKTGIAALPSGANWGQVLGVAILCGIGFTMSLFVGSLAFEPGSSEYAGMDRMGILTGSLFAALIGYAVTAAASRRNNTLAS.

A run of 11 helical transmembrane segments spans residues 11–31 (FAME…ALII), 61–81 (LLLW…GLEV), 96–116 (IVLP…IYWF), 127–147 (GWAI…ALLG), 156–176 (LFLM…IAIF), 179–199 (GTLS…LVAM), 202–222 (MGVV…VCVL), 264–284 (FGIL…GVTL), 295–315 (IAVG…WMAV), 331–351 (VLGV…VGSL), and 366–386 (MGIL…TAAA).

It belongs to the NhaA Na(+)/H(+) (TC 2.A.33) antiporter family.

Its subcellular location is the cell inner membrane. The catalysed reaction is Na(+)(in) + 2 H(+)(out) = Na(+)(out) + 2 H(+)(in). Its function is as follows. Na(+)/H(+) antiporter that extrudes sodium in exchange for external protons. This Pseudomonas fluorescens (strain ATCC BAA-477 / NRRL B-23932 / Pf-5) protein is Na(+)/H(+) antiporter NhaA.